A 433-amino-acid chain; its full sequence is 3-phosphoshikimate 1-carboxyvinyltransferase (433 aa).

Residues K21, S22, and R26 each coordinate 3-phosphoshikimate. Residue K21 participates in phosphoenolpyruvate binding. Residues G92 and R120 each contribute to the phosphoenolpyruvate site. Residues S166, Q168, D317, and K344 each contribute to the 3-phosphoshikimate site. Q168 contacts phosphoenolpyruvate. D317 (proton acceptor) is an active-site residue. Phosphoenolpyruvate-binding residues include R348 and R391.

Belongs to the EPSP synthase family. As to quaternary structure, monomer.

The protein resides in the cytoplasm. The enzyme catalyses 3-phosphoshikimate + phosphoenolpyruvate = 5-O-(1-carboxyvinyl)-3-phosphoshikimate + phosphate. The protein operates within metabolic intermediate biosynthesis; chorismate biosynthesis; chorismate from D-erythrose 4-phosphate and phosphoenolpyruvate: step 6/7. Functionally, catalyzes the transfer of the enolpyruvyl moiety of phosphoenolpyruvate (PEP) to the 5-hydroxyl of shikimate-3-phosphate (S3P) to produce enolpyruvyl shikimate-3-phosphate and inorganic phosphate. The sequence is that of 3-phosphoshikimate 1-carboxyvinyltransferase from Caldicellulosiruptor bescii (strain ATCC BAA-1888 / DSM 6725 / KCTC 15123 / Z-1320) (Anaerocellum thermophilum).